We begin with the raw amino-acid sequence, 748 residues long: E3 ubiquitin-protein ligase DTX3L (748 aa).

Alanine 2 is modified (N-acetylalanine). A Phosphoserine modification is found at serine 9. Disordered regions lie at residues 94 to 117, 209 to 238, and 528 to 562; these read DLRP…PSLT, EQKR…PPDQ, and QETP…PAAS. The span at 101–117 shows a compositional bias: polar residues; that stretch reads SLTQPVETPSSRPPSLT. Basic and acidic residues-rich tracts occupy residues 209–219 and 227–236; these read EQKRKGSEQKR and TPPDVEREPP. Serine 215 carries the post-translational modification Phosphoserine. A Phosphoserine modification is found at serine 536. The segment at 569–608 adopts an RING-type zinc-finger fold; the sequence is CVICMDTISNKHVLPKCKHEFCTSCISKAMLIKPVCPVCL.

This sequence belongs to the Deltex family. Homodimer and heterodimer. Can heterodimerize with DTX1, enhancing its ubiquitin ligase activity in vitro. Interacts (via N-terminus) with ADP ribosyltransferase PARP9/BAL1 (via PARP catalytic domain) forming a stable complex; the interaction is required to activate PARP9 but is dispensable for DTX3L catalytic activity. Forms a complex with STAT1 and PARP9 independently of IFNB1 or IFNG-mediated STAT1 'Tyr-701' phosphorylation. Found in a complex with PARP9, STAT1 and H2BC9. Found in a complex with E3 ligase ITCH and ESCRT-0 components HGS and STAM. Interacts (via C-terminus) with ITCH; the interaction is increased upon CXCL12 stimulation and inhibits ITCH catalytic activity; the interaction is direct. Interacts with HGS and STAM; the interaction brings together HGS and STAM and promotes their recruitment to early endosomes. In terms of processing, autoubiquitinated.

The protein resides in the cytoplasm. It is found in the nucleus. Its subcellular location is the early endosome membrane. The protein localises to the lysosome membrane. It catalyses the reaction S-ubiquitinyl-[E2 ubiquitin-conjugating enzyme]-L-cysteine + [acceptor protein]-L-lysine = [E2 ubiquitin-conjugating enzyme]-L-cysteine + N(6)-ubiquitinyl-[acceptor protein]-L-lysine.. It functions in the pathway protein modification; protein ubiquitination. Its activity is regulated as follows. Binding to PARP9 enhances DTX3L catalytic activity. Its function is as follows. E3 ubiquitin-protein ligase which, in association with ADP-ribosyltransferase PARP9, plays a role in DNA damage repair and in interferon-mediated antiviral responses. Monoubiquitinates several histones, including histone H2A, H2B, H3 and H4. In response to DNA damage, mediates monoubiquitination of 'Lys-91' of histone H4 (H4K91ub1). The exact role of H4K91ub1 in DNA damage response is still unclear but it may function as a licensing signal for additional histone H4 post-translational modifications such as H4 'Lys-20' methylation (H4K20me). PARP1-dependent PARP9-DTX3L-mediated ubiquitination promotes the rapid and specific recruitment of 53BP1/TP53BP1, UIMC1/RAP80, and BRCA1 to DNA damage sites. By monoubiquitinating histone H2B H2BC9/H2BJ and thereby promoting chromatin remodeling, positively regulates STAT1-dependent interferon-stimulated gene transcription and thus STAT1-mediated control of viral replication. Independently of its catalytic activity, promotes the sorting of chemokine receptor CXCR4 from early endosome to lysosome following CXCL12 stimulation by reducing E3 ligase ITCH activity and thus ITCH-mediated ubiquitination of endosomal sorting complex required for transport ESCRT-0 components HGS and STAM. In addition, required for the recruitment of HGS and STAM to early endosomes. The protein is E3 ubiquitin-protein ligase DTX3L (Dtx3l) of Mus musculus (Mouse).